We begin with the raw amino-acid sequence, 400 residues long: Enoyl-[acyl-carrier-protein] reductase [NADH] (400 aa).

NAD(+)-binding positions include 48-53 (GASTGY), 74-75 (FE), 111-112 (DA), and 139-140 (LA). Y225 is a binding site for substrate. Y235 functions as the Proton donor in the catalytic mechanism. Residues K244 and 273-275 (VVT) each bind NAD(+).

Belongs to the TER reductase family. In terms of assembly, monomer.

The enzyme catalyses a 2,3-saturated acyl-[ACP] + NAD(+) = a (2E)-enoyl-[ACP] + NADH + H(+). The protein operates within lipid metabolism; fatty acid biosynthesis. Functionally, involved in the final reduction of the elongation cycle of fatty acid synthesis (FAS II). Catalyzes the reduction of a carbon-carbon double bond in an enoyl moiety that is covalently linked to an acyl carrier protein (ACP). This is Enoyl-[acyl-carrier-protein] reductase [NADH] from Burkholderia lata (strain ATCC 17760 / DSM 23089 / LMG 22485 / NCIMB 9086 / R18194 / 383).